We begin with the raw amino-acid sequence, 184 residues long: Cytochrome c homolog (184 aa).

Residues 1–10 (MDSFELNKIL) lie on the Cytoplasmic side of the membrane. A helical; Signal-anchor transmembrane segment spans residues 11–31 (GAVLGTCLILLVTSFTANALF). Residues 32–184 (SPKMPEKPGF…HPKPLPTASK (153 aa)) lie on the Periplasmic side of the membrane. Heme c contacts are provided by C84, C87, H88, and M151.

Belongs to the cytochrome c family. Binds 1 heme c group covalently per subunit.

It localises to the cell membrane. In terms of biological role, may be involved in electron transfer from bc1 complex to aa3. This Bradyrhizobium diazoefficiens (strain JCM 10833 / BCRC 13528 / IAM 13628 / NBRC 14792 / USDA 110) protein is Cytochrome c homolog (cycM).